Here is a 1056-residue protein sequence, read N- to C-terminus: Carbamoyl phosphate synthase large chain (1056 aa).

The interval 1–398 (MPRDPSIKKV…AFLKALRSLD (398 aa)) is carboxyphosphate synthetic domain. Arginine 127, arginine 167, glycine 173, glycine 174, glutamate 206, valine 208, glutamate 213, glycine 239, valine 240, histidine 241, glutamine 282, and glutamate 295 together coordinate ATP. The ATP-grasp 1 domain maps to 131–324 (RDLMNRIGEP…IARVASKIAI (194 aa)). Glutamine 282, glutamate 295, and asparagine 297 together coordinate Mg(2+). Mn(2+) contacts are provided by glutamine 282, glutamate 295, and asparagine 297. Positions 399–532 (TDVEHHTVLS…STYGDKVCEV (134 aa)) are oligomerization domain. Residues 533-921 (THSDRKKVMI…YKASIAAHNR (389 aa)) are carbamoyl phosphate synthetic domain. In terms of domain architecture, ATP-grasp 2 spans 663 to 854 (SVLLDSLSIP…LAKIAARVMM (192 aa)). 10 residues coordinate ATP: arginine 699, arginine 738, leucine 740, glutamate 745, glycine 770, valine 771, histidine 772, serine 773, glutamine 813, and glutamate 825. Residues glutamine 813, glutamate 825, and asparagine 827 each contribute to the Mg(2+) site. Mn(2+)-binding residues include glutamine 813, glutamate 825, and asparagine 827. One can recognise an MGS-like domain in the interval 920 to 1056 (NRLPKSGNVF…IEPLQHYIGR (137 aa)). An allosteric domain region spans residues 922–1056 (LPKSGNVFIS…IEPLQHYIGR (135 aa)).

This sequence belongs to the CarB family. In terms of assembly, composed of two chains; the small (or glutamine) chain promotes the hydrolysis of glutamine to ammonia, which is used by the large (or ammonia) chain to synthesize carbamoyl phosphate. Tetramer of heterodimers (alpha,beta)4. The cofactor is Mg(2+). Mn(2+) serves as cofactor.

The enzyme catalyses hydrogencarbonate + L-glutamine + 2 ATP + H2O = carbamoyl phosphate + L-glutamate + 2 ADP + phosphate + 2 H(+). The catalysed reaction is hydrogencarbonate + NH4(+) + 2 ATP = carbamoyl phosphate + 2 ADP + phosphate + 2 H(+). It functions in the pathway amino-acid biosynthesis; L-arginine biosynthesis; carbamoyl phosphate from bicarbonate: step 1/1. It participates in pyrimidine metabolism; UMP biosynthesis via de novo pathway; (S)-dihydroorotate from bicarbonate: step 1/3. Functionally, large subunit of the glutamine-dependent carbamoyl phosphate synthetase (CPSase). CPSase catalyzes the formation of carbamoyl phosphate from the ammonia moiety of glutamine, carbonate, and phosphate donated by ATP, constituting the first step of 2 biosynthetic pathways, one leading to arginine and/or urea and the other to pyrimidine nucleotides. The large subunit (synthetase) binds the substrates ammonia (free or transferred from glutamine from the small subunit), hydrogencarbonate and ATP and carries out an ATP-coupled ligase reaction, activating hydrogencarbonate by forming carboxy phosphate which reacts with ammonia to form carbamoyl phosphate. This is Carbamoyl phosphate synthase large chain from Methanospirillum hungatei JF-1 (strain ATCC 27890 / DSM 864 / NBRC 100397 / JF-1).